The following is a 314-amino-acid chain: Transcription factor TCP20 (314 aa).

2 disordered regions span residues 1 to 91 (MDPK…RGRR) and 295 to 314 (NHEE…GSGR). 2 stretches are compositionally biased toward basic and acidic residues: residues 38–49 (DENRKPTTEIKD) and 77–89 (SNKD…EGRG). One can recognise a TCP domain in the interval 78 to 132 (NKDRHTKVEGRGRRIRMPALCAARIFQLTRELGHKSDGETIQWLLQQAEPSIIAA).

In terms of assembly, interacts with PURA1. Interacts with SPL.

It localises to the nucleus. Its function is as follows. Transcription factor that binds to the site II motif (3'-TGGGCC/T-5') in the promoter of PCNA-2 and to 3'-GCCCG/A-5' elements in the promoters of cyclin CYCB1-1 and ribosomal protein genes. This Arabidopsis thaliana (Mouse-ear cress) protein is Transcription factor TCP20 (TCP20).